Here is a 376-residue protein sequence, read N- to C-terminus: Putative glutamate--cysteine ligase 2-3 (376 aa).

Belongs to the glutamate--cysteine ligase type 2 family. YbdK subfamily.

The enzyme catalyses L-cysteine + L-glutamate + ATP = gamma-L-glutamyl-L-cysteine + ADP + phosphate + H(+). Functionally, ATP-dependent carboxylate-amine ligase which exhibits weak glutamate--cysteine ligase activity. The polypeptide is Putative glutamate--cysteine ligase 2-3 (Nocardioides sp. (strain ATCC BAA-499 / JS614)).